The sequence spans 152 residues: Endoribonuclease YbeY (152 aa).

The Zn(2+) site is built by His-118, His-122, and His-128.

This sequence belongs to the endoribonuclease YbeY family. Requires Zn(2+) as cofactor.

Its subcellular location is the cytoplasm. Its function is as follows. Single strand-specific metallo-endoribonuclease involved in late-stage 70S ribosome quality control and in maturation of the 3' terminus of the 16S rRNA. In Lacticaseibacillus casei (strain BL23) (Lactobacillus casei), this protein is Endoribonuclease YbeY.